A 136-amino-acid chain; its full sequence is MTIQKTGCRGREAAEVVEQRRRSHHCDDRKQTLLALLILVLYLGMGISGSSWEVSGQTKDCNHFQNPVTPQGFEYQTKEPAEEPLRTLRKWLKINLHGFLEKLEKEVRELEQLVRDLEFWLDALLGDLRPEDPCFT.

Over 1 to 31 (MTIQKTGCRGREAAEVVEQRRRSHHCDDRKQ) the chain is Cytoplasmic. The chain crosses the membrane as a helical; Signal-anchor for type II membrane protein span at residues 32-52 (TLLALLILVLYLGMGISGSSW). At 53-136 (EVSGQTKDCN…DLRPEDPCFT (84 aa)) the chain is on the extracellular side. A coiled-coil region spans residues 92–124 (LKINLHGFLEKLEKEVRELEQLVRDLEFWLDAL).

It is found in the membrane. The protein is Small integral membrane protein 23 (Smim23) of Mus musculus (Mouse).